We begin with the raw amino-acid sequence, 987 residues long: MSDNEKSTQTEEPNFRYNAALAQDIENKWQKIWDEQGTFWAANVNGDLKDGKGRNAEGRTAYFAMDMFPYPSGKGLHVGHPLGYLASDVVSRYHRMKGENVLHAMGYDAFGLPAEQYAVQTGQHPRVTTEANIANMSRQLHRMGLSFDNRRTFATIDPGYVRWTQWIFSRIYDSWYDEDATNPSGSKGSARPIAELVAKFESGEKAIPGHESDGKQWSDLTDAEQQDILNDFRLAYISKSPVNWCPGLGTVLANEEVTAEGKSERGNFPVFQRELRQWSMRITKYGHRLIADLDGINWPEKVKLMQRNWIGESHGASVHFTVATADGDKDMEIYTTRPDTLFGTTFAVVSPEHHLLENVPAEWPADVPEDWKGGYANPVEAVKAYRLAAEAKTAKDRVNEAGEKTGLFTGLYATNPITGAKLPLFTADYVLMDYGTGAIMAVPGGDQRDYDFAVKFGLPVIYTVTPLPDSGDDLANYEGKAPFVSHDGIVINSSVEATEAKGDALSLNGLRVDDAIAKVNAWLESAGVGKGTVSYRLRDWLFSRQRYWGEPFPIVYGEDGTPHLLPDSALPINLPDVPDYEPRTFDPMDAESNPEAPLSRNEDWVKVELDLGDGKKTYYRDTNTMPNWAGSCWYYMRYIDPTDTKHMVEKDEFDYWMGPNHNKYSGDEGGVDLYIGGVEHAVLHLLYSRFWHKVLFDLGYVDSAEPFHKLFNQGMIQAYAYTDDRGQYVPADEVVEGPADASGEPTFTWNGEHANREFGKMGKSLKNIVTPDYMYENYGADTFRLYEMSMGPLDESRPWNTRNVVGGMRFLQRLWRNVVDETTGQAHVTEDTPDEKTLKLLNNTIAEVTAEMEGMRPNTAIAKLIVLNNHLTGLKAVPRAAVEPLILMLAPIAPHICEEMWSKLGHAESLSAEPWPVADERYVGHDTVTAVVQIKGKVRAKLEVPVDIDPADLEKQALAAVADRLGGKEPRKVIVKAPKIVSIVPAE.

The 'HIGH' region motif lies at 69 to 80 (PYPSGKGLHVGH). The 'KMSKS' region signature appears at 760-764 (KMGKS). K763 contributes to the ATP binding site.

This sequence belongs to the class-I aminoacyl-tRNA synthetase family.

The protein resides in the cytoplasm. The catalysed reaction is tRNA(Leu) + L-leucine + ATP = L-leucyl-tRNA(Leu) + AMP + diphosphate. The sequence is that of Leucine--tRNA ligase from Bifidobacterium longum (strain DJO10A).